The following is a 488-amino-acid chain: Inosine-5'-monophosphate dehydrogenase (488 aa).

CBS domains lie at 95–153 (VISN…SIKI) and 157–216 (MTQE…AKDE). NAD(+) is bound by residues Asp250 and 300–302 (GIG). Residues Gly302 and Gly304 each coordinate K(+). Ser305 provides a ligand contact to IMP. K(+) is bound at residue Cys307. The active-site Thioimidate intermediate is Cys307. IMP is bound by residues 340–342 (DGG), 363–364 (GS), and 387–391 (YRGMG). Arg403 (proton acceptor) is an active-site residue. Glu417 serves as a coordination point for IMP. The tract at residues 468–488 (GLAESHPHNIQITKESPNYSF) is disordered. K(+) is bound by residues Glu471, Ser472, and His473. The span at 475 to 488 (HNIQITKESPNYSF) shows a compositional bias: polar residues.

The protein belongs to the IMPDH/GMPR family. In terms of assembly, homotetramer. K(+) serves as cofactor.

The catalysed reaction is IMP + NAD(+) + H2O = XMP + NADH + H(+). The protein operates within purine metabolism; XMP biosynthesis via de novo pathway; XMP from IMP: step 1/1. Its activity is regulated as follows. Mycophenolic acid (MPA) is a non-competitive inhibitor that prevents formation of the closed enzyme conformation by binding to the same site as the amobile flap. In contrast, mizoribine monophosphate (MZP) is a competitive inhibitor that induces the closed conformation. MPA is a potent inhibitor of mammalian IMPDHs but a poor inhibitor of the bacterial enzymes. MZP is a more potent inhibitor of bacterial IMPDH. Functionally, catalyzes the conversion of inosine 5'-phosphate (IMP) to xanthosine 5'-phosphate (XMP), the first committed and rate-limiting step in the de novo synthesis of guanine nucleotides, and therefore plays an important role in the regulation of cell growth. The chain is Inosine-5'-monophosphate dehydrogenase from Staphylococcus aureus (strain MW2).